Consider the following 577-residue polypeptide: Urease subunit alpha (577 aa).

One can recognise a Urease domain in the interval 136-577 (GTVDCHVHLI…LPMTQRYFLF (442 aa)). Ni(2+) contacts are provided by His141, His143, and Lys224. Lys224 bears the N6-carboxylysine mark. His226 contacts substrate. The Ni(2+) site is built by His253 and His279. The active-site Proton donor is His327. Position 367 (Asp367) interacts with Ni(2+).

It belongs to the metallo-dependent hydrolases superfamily. Urease alpha subunit family. Heterotrimer of UreA (gamma), UreB (beta) and UreC (alpha) subunits. Three heterotrimers associate to form the active enzyme. Ni cation serves as cofactor. Post-translationally, carboxylation allows a single lysine to coordinate two nickel ions.

Its subcellular location is the cytoplasm. It carries out the reaction urea + 2 H2O + H(+) = hydrogencarbonate + 2 NH4(+). It functions in the pathway nitrogen metabolism; urea degradation; CO(2) and NH(3) from urea (urease route): step 1/1. The protein is Urease subunit alpha of Mycobacterium bovis (strain ATCC BAA-935 / AF2122/97).